Consider the following 794-residue polypeptide: DNA ligase (794 aa).

NAD(+)-binding positions include 35–39 (DAEYD), 84–85 (SL), and glutamate 126. The active-site N6-AMP-lysine intermediate is the lysine 128. NAD(+) contacts are provided by arginine 149, glutamate 186, lysine 302, and lysine 326. Zn(2+) is bound by residues cysteine 420, cysteine 423, cysteine 450, and cysteine 456. In terms of domain architecture, BRCT spans 711 to 794 (VEGLPLAGQT…KLLDEYGVAH (84 aa)).

It belongs to the NAD-dependent DNA ligase family. LigA subfamily. Mg(2+) serves as cofactor. The cofactor is Mn(2+).

It catalyses the reaction NAD(+) + (deoxyribonucleotide)n-3'-hydroxyl + 5'-phospho-(deoxyribonucleotide)m = (deoxyribonucleotide)n+m + AMP + beta-nicotinamide D-nucleotide.. Its function is as follows. DNA ligase that catalyzes the formation of phosphodiester linkages between 5'-phosphoryl and 3'-hydroxyl groups in double-stranded DNA using NAD as a coenzyme and as the energy source for the reaction. It is essential for DNA replication and repair of damaged DNA. The sequence is that of DNA ligase from Pseudomonas paraeruginosa (strain DSM 24068 / PA7) (Pseudomonas aeruginosa (strain PA7)).